A 480-amino-acid polypeptide reads, in one-letter code: MSSSEGVVHVAFLPSAGMGHLNPFLRLAATFIRYGCKVTLITPKPTVSLAESNLISRFCSSFPHQVTQLDLNLVSVDPTTVDTIDPFFLQFETIRRSLHLLPPILSLLSTPLSAFIYDITLITPLLSVIEKLSCPSYLYFTSSARMFSFFARVSVLSASNPGQTPSSFIGDDGVKIPGFTSPIPRSSVPPAILQASSNLFQRIMLEDSANVTKLNNGVFINSFEELEGEALAALNGGKVLEGLPPVYGVGPLMACEYEKGDEEGQKGCMSSIVKWLDEQSKGSVVYVSLGNRTETRREQIKDMALGLIECGYGFLWVVKLKRVDKEDEEGLEEVLGSELSSKVKEKGVVVKEFVDQVEILGHPSVGGFLSHGGWNSVTETVWKGVPCLSWPQHSDQKMSAEVIRMSGMGIWPEEWGWGTQDVVKGDEIAKRIKEMMSNESLRVKAGELKEAALKAAGVGGSCEVTIKRQIEEWKRNAQAN.

Histidine 20 functions as the Proton acceptor in the catalytic mechanism. An an anthocyanidin-binding site is contributed by histidine 20. The active-site Charge relay is aspartate 118. Position 141 (threonine 141) interacts with UDP-alpha-D-glucose. The segment at asparagine 291–arginine 292 is UDP. Positions 354, 356, 371, 374, 375, 376, 379, 395, and 396 each coordinate UDP-alpha-D-glucose.

This sequence belongs to the UDP-glycosyltransferase family.

It catalyses the reaction a 3'-hydro-2'-hydroxy-beta-oxodihydrochalcone + UDP-alpha-D-glucose = a 3'-(beta-D-glucopyranosyl)-2'-hydroxy-beta-oxodihydrochalcone + UDP + H(+). Functionally, UDP-glucose-dependent glucosyltransferase catalyzing the c-glucosylation of the A ring of 2-hydroxynaringenin. Also active toward phloretin, but not toward naringenin and apigenin. The sequence is that of UDP-glycosyltransferase 708D1 from Glycine max (Soybean).